Reading from the N-terminus, the 193-residue chain is ATP synthase subunit b (193 aa).

The chain crosses the membrane as a helical span at residues 24–44 (PLAELIVGLLAFGLLVGFFFW).

Belongs to the ATPase B chain family. As to quaternary structure, F-type ATPases have 2 components, F(1) - the catalytic core - and F(0) - the membrane proton channel. F(1) has five subunits: alpha(3), beta(3), gamma(1), delta(1), epsilon(1). F(0) has three main subunits: a(1), b(2) and c(10-14). The alpha and beta chains form an alternating ring which encloses part of the gamma chain. F(1) is attached to F(0) by a central stalk formed by the gamma and epsilon chains, while a peripheral stalk is formed by the delta and b chains.

It localises to the cell membrane. In terms of biological role, f(1)F(0) ATP synthase produces ATP from ADP in the presence of a proton or sodium gradient. F-type ATPases consist of two structural domains, F(1) containing the extramembraneous catalytic core and F(0) containing the membrane proton channel, linked together by a central stalk and a peripheral stalk. During catalysis, ATP synthesis in the catalytic domain of F(1) is coupled via a rotary mechanism of the central stalk subunits to proton translocation. Its function is as follows. Component of the F(0) channel, it forms part of the peripheral stalk, linking F(1) to F(0). In Parafrankia sp. (strain EAN1pec), this protein is ATP synthase subunit b.